We begin with the raw amino-acid sequence, 432 residues long: Glutamate-1-semialdehyde 2,1-aminomutase (432 aa).

Lys-269 carries the post-translational modification N6-(pyridoxal phosphate)lysine.

The protein belongs to the class-III pyridoxal-phosphate-dependent aminotransferase family. HemL subfamily. As to quaternary structure, homodimer. It depends on pyridoxal 5'-phosphate as a cofactor.

It localises to the cytoplasm. The enzyme catalyses (S)-4-amino-5-oxopentanoate = 5-aminolevulinate. The protein operates within porphyrin-containing compound metabolism; protoporphyrin-IX biosynthesis; 5-aminolevulinate from L-glutamyl-tRNA(Glu): step 2/2. The protein is Glutamate-1-semialdehyde 2,1-aminomutase of Desulforudis audaxviator (strain MP104C).